Consider the following 778-residue polypeptide: Endonuclease MutS2 (778 aa).

328–335 (GPNTGGKT) provides a ligand contact to ATP. A Smr domain is found at 702-777 (LDLRGKRYEE…GSGATIVTFK (76 aa)).

The protein belongs to the DNA mismatch repair MutS family. MutS2 subfamily. Homodimer. Binds to stalled ribosomes, contacting rRNA.

In terms of biological role, endonuclease that is involved in the suppression of homologous recombination and thus may have a key role in the control of bacterial genetic diversity. Functionally, acts as a ribosome collision sensor, splitting the ribosome into its 2 subunits. Detects stalled/collided 70S ribosomes which it binds and splits by an ATP-hydrolysis driven conformational change. Acts upstream of the ribosome quality control system (RQC), a ribosome-associated complex that mediates the extraction of incompletely synthesized nascent chains from stalled ribosomes and their subsequent degradation. Probably generates substrates for RQC. This chain is Endonuclease MutS2, found in Streptococcus pneumoniae serotype 19F (strain G54).